The primary structure comprises 246 residues: MQLKTSIGLITCRMNTQNNQIETILVQKRYSLAFSEFIHCHYSINANQGHLIKMFNNMTINERLLVKTLDFDRMWYHIWIETPVYELYHKKYQKFRKNWLLPDNGKKLISLINQAKGSGTLLWEIPKGKPKEDESDLTCAIREFEEETGITREYYQILPEFKKSMSYFDGKTEYKHIYFLAMLCKSLEEPNMNLSLQYENRIAEISKISWQNMEAVRFISKRQSLNLEPIIGPAFNFIKNYLRYKH.

In terms of domain architecture, Nudix hydrolase spans 93 to 239; the sequence is QKFRKNWLLP…IIGPAFNFIK (147 aa). Positions 128–149 match the Nudix box motif; it reads GKPKEDESDLTCAIREFEEETG. Glutamate 134 serves as a coordination point for Mg(2+). Residue glutamate 143 is the Nucleophile of the active site. Residues glutamate 147 and aspartate 169 each coordinate Mg(2+).

This sequence belongs to the Nudix hydrolase family. DIPP subfamily. Interacts with host RPL23A. The cofactor is Mg(2+). Mn(2+) serves as cofactor.

The protein localises to the host rough endoplasmic reticulum. It carries out the reaction diphospho-myo-inositol polyphosphate + H2O = myo-inositol polyphosphate + phosphate.. Decapping enzyme required for the removal of the 5'-end m7GpppN cap tethered to viral and host mRNAs to allow their decay in cells. May therefore accelerate viral and cellular mRNA turnover to eliminate competing host mRNAs and allow stage-specific synthesis of viral proteins. Acceleration of the turnover of cellular transcripts may even promote the shutoff of host protein synthesis. In addition to the mRNA cap, g5R also efficiently hydrolyzes diphosphoinositol polyphosphates. Down-regulation of the level of PP-InsP5 (diphosphoinositol pentakisphosphate) may play a role in viral manipulation of the cellular secretory pathway, a step necessary for the formation of virions. Binds viral and cellular poly(A) mRNAs, thereby decreasing both types of mRNAs. The sequence is that of mRNA-decapping protein g5R from African swine fever virus (isolate Warthog/Namibia/Wart80/1980) (ASFV).